A 159-amino-acid polypeptide reads, in one-letter code: uncharacterized protein (159 aa).

The segment at 1-139 (MSRRAPGSRL…RKSQERSMSY (139 aa)) is disordered. Residues 9–31 (RLSSGGTNYSRSWNDWQPRTDSA) are compositionally biased toward polar residues. A compositionally biased stretch (basic and acidic residues) spans 65–82 (QRHDDTRVHADIQNDEKG). Polar residues predominate over residues 105–119 (RVNNVTSPEFTSVQH). Residues 125–134 (ATKDMRKSQE) show a composition bias toward basic and acidic residues.

This is an uncharacterized protein from Homo sapiens (Human).